Reading from the N-terminus, the 308-residue chain is Probable very-long-chain enoyl-CoA reductase art-1 (308 aa).

The 79-residue stretch at 7–85 (VYDAKRTDNL…VLYVRDLGPQ (79 aa)) folds into the Ubiquitin-like domain. The next 4 membrane-spanning stretches (helical) occupy residues 112–132 (FIYG…IAFF), 169–189 (WGFA…PPAF), 194–214 (VYFG…IHIL), and 255–275 (WIFF…TAGF).

Belongs to the steroid 5-alpha reductase family.

It is found in the endoplasmic reticulum membrane. The enzyme catalyses a very-long-chain 2,3-saturated fatty acyl-CoA + NADP(+) = a very-long-chain (2E)-enoyl-CoA + NADPH + H(+). The protein operates within lipid metabolism; fatty acid biosynthesis. Functionally, catalyzes the last of the four reactions of the long-chain fatty acids elongation cycle. This endoplasmic reticulum-bound enzymatic process, allows the addition of 2 carbons to the chain of long- and very long-chain fatty acids/VLCFAs per cycle. This enzyme reduces the trans-2,3-enoyl-CoA fatty acid intermediate to an acyl-CoA that can be further elongated by entering a new cycle of elongation. Thereby, it participates in the production of VLCFAs of different chain lengths that are involved in multiple biological processes as precursors of membrane lipids and lipid mediators. In Caenorhabditis elegans, this protein is Probable very-long-chain enoyl-CoA reductase art-1 (art-1).